A 314-amino-acid chain; its full sequence is Epithelial-stromal interaction protein 1 (314 aa).

4 disordered regions span residues 1–72 (MYPR…PNET), 200–219 (NRSA…WKLP), 225–267 (PSRA…HQEE), and 292–314 (SQPG…GWGI). Residues 43-58 (AEPKGPKLERQGHGDQ) are compositionally biased toward basic and acidic residues. Residues 71 to 180 (ETRRQKIQRI…QEDIRRATLR (110 aa)) are a coiled coil. The span at 232–267 (AHKDSPQKEDNQKLQKTRDGHQKNKLLETKGQHQEE) shows a compositional bias: basic and acidic residues. A compositionally biased stretch (polar residues) spans 305–314 (NMNSTDGWGI).

In terms of biological role, plays a role in M1 macrophage polarization and is required for the proper regulation of gene expression during M1 versus M2 macrophage differentiation. Might play a role in RELA/p65 and STAT1 phosphorylation and nuclear localization upon activation of macrophages. The chain is Epithelial-stromal interaction protein 1 (Epsti1) from Rattus norvegicus (Rat).